The chain runs to 367 residues: GDP-perosamine synthase (367 aa).

K181 is subject to N6-(pyridoxal phosphate)lysine.

This sequence belongs to the DegT/DnrJ/EryC1 family. Homotetramer. The cofactor is pyridoxal 5'-phosphate.

The catalysed reaction is GDP-alpha-D-perosamine + 2-oxoglutarate = GDP-4-dehydro-alpha-D-rhamnose + L-glutamate. Its pathway is bacterial outer membrane biogenesis; LPS O-antigen biosynthesis. Catalyzes the synthesis of GDP-perosamine from GDP-4-keto-6-deoxy-D-mannose and L-glutamate. Also shows weak activity with L-glutamine. This Vibrio cholerae protein is GDP-perosamine synthase.